A 726-amino-acid chain; its full sequence is Peroxisomal fatty acid beta-oxidation multifunctional protein (726 aa).

In the N-terminal section; belongs to the enoyl-CoA hydratase/isomerase family. It in the central section; belongs to the 3-hydroxyacyl-CoA dehydrogenase family. In terms of assembly, monomer.

It localises to the peroxisome. It is found in the cytoplasm. The protein resides in the cytoskeleton. It catalyses the reaction a (3S)-3-hydroxyacyl-CoA = a (2E)-enoyl-CoA + H2O. The catalysed reaction is a 4-saturated-(3S)-3-hydroxyacyl-CoA = a (3E)-enoyl-CoA + H2O. The enzyme catalyses a (3Z)-enoyl-CoA = a 4-saturated (2E)-enoyl-CoA. It carries out the reaction a (3E)-enoyl-CoA = a 4-saturated (2E)-enoyl-CoA. It catalyses the reaction (3S)-3-hydroxybutanoyl-CoA = (3R)-3-hydroxybutanoyl-CoA. The catalysed reaction is a (3S)-3-hydroxyacyl-CoA + NAD(+) = a 3-oxoacyl-CoA + NADH + H(+). The protein operates within lipid metabolism; fatty acid beta-oxidation. Multifunctional enzyme involved in fatty acid beta-oxidation. Also binds to RNA and microtubules. Possible role in subcellular mRNA localization and RNA-cytoskeleton interactions. The protein is Peroxisomal fatty acid beta-oxidation multifunctional protein (MFP) of Oryza sativa subsp. japonica (Rice).